A 74-amino-acid chain; its full sequence is MKPNSHPEYVTTEVACSCGNTFTTRSTAKGGSIHVETCSACHPFYTGKQRVLDTAGRVAKFQQKYAKVQAKKGK.

Residues C16, C18, C38, and C41 each contribute to the Zn(2+) site.

This sequence belongs to the bacterial ribosomal protein bL31 family. Type A subfamily. Part of the 50S ribosomal subunit. Zn(2+) is required as a cofactor.

Its function is as follows. Binds the 23S rRNA. This Salinispora tropica (strain ATCC BAA-916 / DSM 44818 / JCM 13857 / NBRC 105044 / CNB-440) protein is Large ribosomal subunit protein bL31.